Reading from the N-terminus, the 437-residue chain is Protein translocase subunit SecY (437 aa).

A run of 10 helical transmembrane segments spans residues 23–43, 77–97, 125–145, 154–174, 183–203, 217–237, 271–291, 315–335, 367–387, and 395–415; these read IVFLIVAIIVFRIGSFIPIPG, IFALGIMPYISASIIIQLLTL, LILALVQSIGIAMTLPNIAGI, FYFYLIAIISLVTSTMFLMWL, IGNGISIIIFIGIIAGLPSAI, ILLFLFILLLIFSVIFLVVFM, MAGVIPAIFASSIVLFPATII, YLILYISAIVFFCFFYTGLVF, IMLRLTLVGSLYITFICLIPE, and VPFYFGGTSLLIVVVVIIDFI.

Belongs to the SecY/SEC61-alpha family. Component of the Sec protein translocase complex. Heterotrimer consisting of SecY, SecE and SecG subunits. The heterotrimers can form oligomers, although 1 heterotrimer is thought to be able to translocate proteins. Interacts with the ribosome. Interacts with SecDF, and other proteins may be involved. Interacts with SecA.

The protein resides in the cell membrane. Its function is as follows. The central subunit of the protein translocation channel SecYEG. Consists of two halves formed by TMs 1-5 and 6-10. These two domains form a lateral gate at the front which open onto the bilayer between TMs 2 and 7, and are clamped together by SecE at the back. The channel is closed by both a pore ring composed of hydrophobic SecY resides and a short helix (helix 2A) on the extracellular side of the membrane which forms a plug. The plug probably moves laterally to allow the channel to open. The ring and the pore may move independently. The sequence is that of Protein translocase subunit SecY from Buchnera aphidicola subsp. Acyrthosiphon pisum (strain APS) (Acyrthosiphon pisum symbiotic bacterium).